The chain runs to 23 residues: GVSKILHSAGKFGKAFLGEIMKS.

Expressed by the skin glands.

It localises to the secreted. Its function is as follows. Antimicrobial peptide. The chain is Magainin-BM2 from Xenopus boumbaensis (Mawa clawed frog).